Reading from the N-terminus, the 183-residue chain is MQNRTGLILCALSLLTGFLMICLGGFFISNSIFHSQRNLVVAYVLLPMGFVILLSGIFWGTYRQANENKEMFNHVLRQHLAFQDLPLATVDRPDFYPPAYEESLDVEKQACPAGRELLGFPPPLYTETNLEFEHLEDPQPEAPPPYQEIIADAGAPAKAQDAEEPSRVLKAGTALQLTELTGR.

2 helical membrane passes run 8-28 (ILCA…GFFI) and 39-59 (LVVA…GIFW).

It localises to the membrane. This Mus musculus (Mouse) protein is Transmembrane protein 252 (Tmem252).